The sequence spans 446 residues: Phosphoglucosamine mutase (446 aa).

Ser101 acts as the Phosphoserine intermediate in catalysis. Residues Ser101, Asp240, Asp242, and Asp244 each coordinate Mg(2+). A Phosphoserine modification is found at Ser101.

It belongs to the phosphohexose mutase family. The cofactor is Mg(2+). Post-translationally, activated by phosphorylation.

The catalysed reaction is alpha-D-glucosamine 1-phosphate = D-glucosamine 6-phosphate. Catalyzes the conversion of glucosamine-6-phosphate to glucosamine-1-phosphate. In Coxiella burnetii (strain Dugway 5J108-111), this protein is Phosphoglucosamine mutase.